A 442-amino-acid polypeptide reads, in one-letter code: Probable carboxypeptidase PADG_04062 (442 aa).

The N-terminal stretch at 1-20 is a signal peptide; that stretch reads MKLQYLVALLSVQAVPPVTA. N102 carries N-linked (GlcNAc...) asparagine glycosylation. D160 contributes to the Zn(2+) binding site. E192 acts as the Proton acceptor in catalysis. E193 contributes to the Zn(2+) binding site. The N-linked (GlcNAc...) asparagine glycan is linked to N343.

This sequence belongs to the peptidase M20A family. Zn(2+) is required as a cofactor.

The protein localises to the secreted. The chain is Probable carboxypeptidase PADG_04062 from Paracoccidioides brasiliensis (strain Pb18).